The chain runs to 357 residues: DNA replication and repair protein RecF (357 aa).

Position 30–37 (30–37) interacts with ATP; the sequence is GANGSGKT.

The protein belongs to the RecF family.

Its subcellular location is the cytoplasm. The RecF protein is involved in DNA metabolism; it is required for DNA replication and normal SOS inducibility. RecF binds preferentially to single-stranded, linear DNA. It also seems to bind ATP. The polypeptide is DNA replication and repair protein RecF (Citrobacter koseri (strain ATCC BAA-895 / CDC 4225-83 / SGSC4696)).